A 296-amino-acid chain; its full sequence is Formamidopyrimidine-DNA glycosylase (296 aa).

P2 (schiff-base intermediate with DNA) is an active-site residue. E3 serves as the catalytic Proton donor. Residue K58 is the Proton donor; for beta-elimination activity of the active site. The DNA site is built by H104, R126, and K169. The FPG-type zinc-finger motif lies at 260–296 (SVYDRAGEACRKPGCDGTVTRIVQAGRSTFHCPRCQK). The active-site Proton donor; for delta-elimination activity is the R286.

It belongs to the FPG family. As to quaternary structure, monomer. Zn(2+) is required as a cofactor.

The catalysed reaction is Hydrolysis of DNA containing ring-opened 7-methylguanine residues, releasing 2,6-diamino-4-hydroxy-5-(N-methyl)formamidopyrimidine.. It carries out the reaction 2'-deoxyribonucleotide-(2'-deoxyribose 5'-phosphate)-2'-deoxyribonucleotide-DNA = a 3'-end 2'-deoxyribonucleotide-(2,3-dehydro-2,3-deoxyribose 5'-phosphate)-DNA + a 5'-end 5'-phospho-2'-deoxyribonucleoside-DNA + H(+). Its function is as follows. Involved in base excision repair of DNA damaged by oxidation or by mutagenic agents. Acts as a DNA glycosylase that recognizes and removes damaged bases. Has a preference for oxidized purines, such as 7,8-dihydro-8-oxoguanine (8-oxoG). Has AP (apurinic/apyrimidinic) lyase activity and introduces nicks in the DNA strand. Cleaves the DNA backbone by beta-delta elimination to generate a single-strand break at the site of the removed base with both 3'- and 5'-phosphates. The sequence is that of Formamidopyrimidine-DNA glycosylase from Sinorhizobium fredii (strain NBRC 101917 / NGR234).